We begin with the raw amino-acid sequence, 393 residues long: Elongation factor Tu (393 aa).

The 199-residue stretch at 6-204 folds into the tr-type G domain; sequence KPHINVGTIG…ALEKIELPVR (199 aa). The G1 stretch occupies residues 15 to 22; that stretch reads GHVDHGKT. GTP is bound at residue 15–22; that stretch reads GHVDHGKT. A Mg(2+)-binding site is contributed by Thr22. The interval 58-62 is G2; that stretch reads GITIS. Positions 79–82 are G3; sequence DCPG. GTP is bound by residues 79–83 and 134–137; these read DCPGH and NKCD. The interval 134–137 is G4; it reads NKCD. The interval 172-174 is G5; that stretch reads SAV.

It belongs to the TRAFAC class translation factor GTPase superfamily. Classic translation factor GTPase family. EF-Tu/EF-1A subfamily. In terms of assembly, monomer.

Its subcellular location is the cytoplasm. The enzyme catalyses GTP + H2O = GDP + phosphate + H(+). Its function is as follows. GTP hydrolase that promotes the GTP-dependent binding of aminoacyl-tRNA to the A-site of ribosomes during protein biosynthesis. This chain is Elongation factor Tu, found in Anaplasma marginale (strain St. Maries).